The chain runs to 123 residues: Glucose starvation-inducible protein B (123 aa).

2 stretches are compositionally biased toward basic and acidic residues: residues 1–29 and 41–109; these read MADNNKMSREEAGRKGGETTSKNHDKEFY and SKNH…KEFY. The segment at 1 to 123 is disordered; that stretch reads MADNNKMSRE…SKGGNARNND (123 aa). 5 repeat units span residues 13 to 32, 33 to 52, 53 to 72, 73 to 92, and 93 to 112. Positions 13–120 are 5 X 20 AA approximate tandem repeats; the sequence is GRKGGETTSK…EIGSKGGNAR (108 aa).

Involved in an adaptive response to nutrient deprivation other than sporulation. This chain is Glucose starvation-inducible protein B (gsiB), found in Bacillus subtilis (strain 168).